Here is a 201-residue protein sequence, read N- to C-terminus: NADH-ubiquinone oxidoreductase 21.3 kDa subunit (201 aa).

In terms of assembly, complex I is composed of about 40 different subunits.

It is found in the mitochondrion inner membrane. It catalyses the reaction a ubiquinone + NADH + 5 H(+)(in) = a ubiquinol + NAD(+) + 4 H(+)(out). Functionally, transfer of electrons from NADH to the respiratory chain. The immediate electron acceptor for the enzyme is believed to be ubiquinone. The protein is NADH-ubiquinone oxidoreductase 21.3 kDa subunit of Neurospora crassa (strain ATCC 24698 / 74-OR23-1A / CBS 708.71 / DSM 1257 / FGSC 987).